The chain runs to 558 residues: T-complex protein 1 subunit eta (558 aa).

Residues 524-558 form a disordered region; that stretch reads VRNPKSEQPKAPPGGLRRGGPQGMAGLAKNARLGK.

Belongs to the TCP-1 chaperonin family. As to quaternary structure, heterooligomeric complex of about 850 to 900 kDa that forms two stacked rings, 12 to 16 nm in diameter.

The protein localises to the cytoplasm. In terms of biological role, molecular chaperone; assists the folding of proteins upon ATP hydrolysis. Known to play a role, in vitro, in the folding of actin and tubulin. The polypeptide is T-complex protein 1 subunit eta (Tetrahymena pyriformis).